A 114-amino-acid polypeptide reads, in one-letter code: Ribonuclease P protein component (114 aa).

This sequence belongs to the RnpA family. As to quaternary structure, consists of a catalytic RNA component (M1 or rnpB) and a protein subunit.

The enzyme catalyses Endonucleolytic cleavage of RNA, removing 5'-extranucleotides from tRNA precursor.. Its function is as follows. RNaseP catalyzes the removal of the 5'-leader sequence from pre-tRNA to produce the mature 5'-terminus. It can also cleave other RNA substrates such as 4.5S RNA. The protein component plays an auxiliary but essential role in vivo by binding to the 5'-leader sequence and broadening the substrate specificity of the ribozyme. This chain is Ribonuclease P protein component, found in Lactiplantibacillus plantarum (strain ATCC BAA-793 / NCIMB 8826 / WCFS1) (Lactobacillus plantarum).